We begin with the raw amino-acid sequence, 67 residues long: Neurotoxin Os3 (67 aa).

Residues 3–67 (RDGYIAQPHN…GVIVDGEKCH (65 aa)) enclose the LCN-type CS-alpha/beta domain. Cystine bridges form between Cys13–Cys66, Cys17–Cys39, Cys24–Cys48, and Cys28–Cys50.

The protein belongs to the long (4 C-C) scorpion toxin superfamily. Sodium channel inhibitor family. Alpha subfamily. Expressed by the venom gland.

Its subcellular location is the secreted. Its function is as follows. Binds to sodium channels (Nav) and inhibits the inactivation of the activated channels, thereby blocking neuronal transmission. This chain is Neurotoxin Os3, found in Orthochirus scrobiculosus (Central Asian scorpion).